A 475-amino-acid polypeptide reads, in one-letter code: Glutamate--tRNA ligase (475 aa).

The short motif at 8 to 18 (PSPTGTLHIGT) is the 'HIGH' region element. Residues 247-251 (KLSKR) carry the 'KMSKS' region motif. Lysine 250 contacts ATP.

The protein belongs to the class-I aminoacyl-tRNA synthetase family. Glutamate--tRNA ligase type 1 subfamily. Monomer.

Its subcellular location is the cytoplasm. The enzyme catalyses tRNA(Glu) + L-glutamate + ATP = L-glutamyl-tRNA(Glu) + AMP + diphosphate. In terms of biological role, catalyzes the attachment of glutamate to tRNA(Glu) in a two-step reaction: glutamate is first activated by ATP to form Glu-AMP and then transferred to the acceptor end of tRNA(Glu). This is Glutamate--tRNA ligase from Synechococcus sp. (strain RCC307).